Consider the following 318-residue polypeptide: Isoflavone reductase (318 aa).

NADP(+)-binding positions include 11 to 17, arginine 36, and lysine 44; that span reads GPTGAIG. The active-site Proton acceptor is the lysine 144. Position 148 (arginine 148) interacts with NADP(+).

This sequence belongs to the NmrA-type oxidoreductase family. Isoflavone reductase subfamily.

The catalysed reaction is (3R)-vestitone + NADP(+) = 2'-hydroxyformononetin + NADPH + 2 H(+). It participates in phytoalexin biosynthesis; pterocarpan phytoalexin biosynthesis. Reduces achiral isoflavones to chiral isoflavanones during the biosynthesis of chiral pterocarpan phytoalexins. The reduction product is a third isomer, which represents the penultimate intermediate in the synthesis of the phytoalexin (-)-medicarpin, the major phytoalexin in Alfalfa. The polypeptide is Isoflavone reductase (Medicago sativa (Alfalfa)).